Reading from the N-terminus, the 218-residue chain is Ras-related protein RABA1i (218 aa).

20–27 (GDSGVGKS) contributes to the GTP binding site. An Effector region motif is present at residues 42–50 (SRATIGVEF). GTP contacts are provided by residues 68–72 (DTAGQ), 126–129 (NKAD), and 156–157 (SA). Residues C215 and C216 are each lipidated (S-geranylgeranyl cysteine).

It belongs to the small GTPase superfamily. Rab family.

Its subcellular location is the cell membrane. In terms of biological role, intracellular vesicle trafficking and protein transport. In Arabidopsis thaliana (Mouse-ear cress), this protein is Ras-related protein RABA1i (RABA1I).